The chain runs to 123 residues: Probable ketoamine kinase in tonB 3'region (123 aa).

The Proton acceptor role is filled by Asp26.

The protein belongs to the fructosamine kinase family.

Ketoamine kinase that phosphorylates ketoamines on the third carbon of the sugar moiety to generate ketoamine 3-phosphate. This is Probable ketoamine kinase in tonB 3'region from Klebsiella pneumoniae.